A 494-amino-acid chain; its full sequence is Probable cobyric acid synthase (494 aa).

Positions 249-447 (SVRIAVIRLP…LHGIFFNRRF (199 aa)) constitute a GATase cobBQ-type domain. Residue cysteine 331 is the Nucleophile of the active site. Residue histidine 439 is part of the active site.

It belongs to the CobB/CobQ family. CobQ subfamily.

It participates in cofactor biosynthesis; adenosylcobalamin biosynthesis. Functionally, catalyzes amidations at positions B, D, E, and G on adenosylcobyrinic A,C-diamide. NH(2) groups are provided by glutamine, and one molecule of ATP is hydrogenolyzed for each amidation. The chain is Probable cobyric acid synthase from Methanopyrus kandleri (strain AV19 / DSM 6324 / JCM 9639 / NBRC 100938).